We begin with the raw amino-acid sequence, 422 residues long: Zinc finger protein Gfi-1 (422 aa).

An SNAG domain region spans residues 1–20; it reads MPRSFLVKSKKAHSYHQPRS. The disordered stretch occupies residues 1 to 109; it reads MPRSFLVKSK…ASEKSMCPSL (109 aa). Phosphoserine is present on residues Ser-20 and Ser-56. Residues 140–257 are required for interaction with RELA; the sequence is RPCGALERGA…LLLGGGSYKC (118 aa). C2H2-type zinc fingers lie at residues 255-278, 284-306, 312-334, 340-362, 368-390, and 396-419; these read YKCI…RRSH, FACE…KAVH, FDCK…LLIH, YPCQ…TFIH, HKCQ…SRKH, and FGCD…ETQH.

In terms of assembly, interacts with U2AF1L4. Component of RCOR-GFI-KDM1A-HDAC complexes. Interacts directly with RCOR1, KDM1A and HDAC2. Also interacts with HDAC1. Interacts (via the zinc-finger domain) with ARIH2; the interaction prevents GFI1 ubiquitination and proteasomal degradation. Interacts with PIAS3; the interaction relieves the inhibitory effect of PIAS3 on STAT3-mediated transcriptional activity. Forms a complex with EHMT2 and HDAC1 to promote 'Lys-9' dimethylation of H3 (H3K9Me2) and repress expression of target genes. Interacts directly with EHMT2. Component of the GFI1-AJUBA-HDAC1 repressor complex. Interacts directly with AJUBA (via ITS LIM domains); the interaction results in the HDAC-dependent corepression of a subset of GFI1 target genes and, occurs independently of the SNAG domain. Interacts with SPI1; the interaction inhibits SPI1 transcriptional activity targeted at macrophage-specific genes, repressing macrophage differentiation of myeloid progenitor cells and promoting granulocyte commitment. Interacts with RUNX1T1; the interaction represses HDAC-mediated transcriptional activity. Interacts with RELA; the interaction occurs on liposaccharide (LPS) stimulation and controls RELA DNA binding activity and regulates endotoxin-mediated TOLL-like receptor inflammatory response. Interacts (via the C-terminal zinc fingers) with ZBTB17; the interaction results in the recruitment of GFI1 to the CDKN1A/p21 and CDKN1B promoters and repression of transcription. Post-translationally, ubiquitinated. Ubiquitination and degradation by the proteasome is inhibited by the ubiquitin ligase, ARIH2.

The protein resides in the nucleus. Transcription repressor essential for hematopoiesis. Functions in a cell-context and development-specific manner. Binds to 5'-TAAATCAC[AT]GCA-3' in the promoter region of a large number of genes. Component of several complexes, including the EHMT2-GFI1-HDAC1, AJUBA-GFI1-HDAC1 and RCOR-GFI-KDM1A-HDAC complexes, that suppress, via histone deacetylase (HDAC) recruitment, a number of genes implicated in multilineage blood cell development. Regulates neutrophil differentiation, promotes proliferation of lymphoid cells, and is required for granulocyte development. Inhibits SPI1 transcriptional activity at macrophage-specific genes, repressing macrophage differentiation of myeloid progenitor cells and promoting granulocyte commitment. Mediates, together with U2AF1L4, the alternative splicing of CD45 and controls T-cell receptor signaling. Regulates the endotoxin-mediated Toll-like receptor (TLR) inflammatory response by antagonizing RELA. Cooperates with CBFA2T2 to regulate ITGB1-dependent neurite growth. Controls cell-cycle progression by repressing CDKNIA/p21 transcription in response to TGFB1 via recruitment of GFI1 by ZBTB17 to the CDKNIA/p21 and CDKNIB promoters. Required for the maintenance of inner ear hair cells. In addition to its role in transcription, acts as a substrate adapter for PRMT1 in the DNA damage response: facilitates the recognition of TP53BP1 and MRE11 substrates by PRMT1, promoting their methylation and the DNA damage response. This chain is Zinc finger protein Gfi-1 (GFI1), found in Homo sapiens (Human).